A 68-amino-acid chain; its full sequence is Large ribosomal subunit protein uL29 (68 aa).

Belongs to the universal ribosomal protein uL29 family.

This chain is Large ribosomal subunit protein uL29, found in Streptococcus sanguinis (strain SK36).